The sequence spans 984 residues: Probable beta-galactosidase C (984 aa).

The N-terminal stretch at 1–19 is a signal peptide; it reads MRLLNIFTTLCLLLWSGAA. Residues Y78, N123, A124, E125, and N183 each contribute to the substrate site. E184 serves as the catalytic Proton donor. Y247 is a binding site for substrate. A disulfide bridge connects residues C253 and C300. N-linked (GlcNAc...) asparagine glycosylation occurs at N272. Catalysis depends on E283, which acts as the Nucleophile. Substrate is bound at residue Y349. N387, N433, N462, N516, N583, N599, N673, N716, N756, N860, and N870 each carry an N-linked (GlcNAc...) asparagine glycan.

It belongs to the glycosyl hydrolase 35 family.

It is found in the secreted. It catalyses the reaction Hydrolysis of terminal non-reducing beta-D-galactose residues in beta-D-galactosides.. Its function is as follows. Cleaves beta-linked terminal galactosyl residues from gangliosides, glycoproteins, and glycosaminoglycans. This chain is Probable beta-galactosidase C (lacC), found in Sclerotinia sclerotiorum (strain ATCC 18683 / 1980 / Ss-1) (White mold).